The chain runs to 181 residues: Adenylate kinase (181 aa).

Position 10–15 (10–15) interacts with ATP; the sequence is GAGKGT. Positions 30–59 are NMP; it reads STGDLFRANIGEGTPLGLEAKSYIDAGKLV. Residues Thr31, Arg36, 57–59, 85–88, and Gln92 contribute to the AMP site; these read KLV and GFPR. The interval 126–132 is LID; it reads ARGRADD. Arg127 provides a ligand contact to ATP. 2 residues coordinate AMP: Arg129 and Arg140. Gly166 contributes to the ATP binding site.

Belongs to the adenylate kinase family. In terms of assembly, monomer.

The protein resides in the cytoplasm. It carries out the reaction AMP + ATP = 2 ADP. The protein operates within purine metabolism; AMP biosynthesis via salvage pathway; AMP from ADP: step 1/1. Its function is as follows. Catalyzes the reversible transfer of the terminal phosphate group between ATP and AMP. Plays an important role in cellular energy homeostasis and in adenine nucleotide metabolism. The sequence is that of Adenylate kinase from Corynebacterium aurimucosum (strain ATCC 700975 / DSM 44827 / CIP 107346 / CN-1) (Corynebacterium nigricans).